Consider the following 216-residue polypeptide: Pyrrolidone-carboxylate peptidase (216 aa).

Catalysis depends on residues glutamate 80, cysteine 143, and histidine 168.

Belongs to the peptidase C15 family. In terms of assembly, homotetramer.

Its subcellular location is the cytoplasm. It catalyses the reaction Release of an N-terminal pyroglutamyl group from a polypeptide, the second amino acid generally not being Pro.. Removes 5-oxoproline from various penultimate amino acid residues except L-proline. The chain is Pyrrolidone-carboxylate peptidase from Cupriavidus necator (strain ATCC 17699 / DSM 428 / KCTC 22496 / NCIMB 10442 / H16 / Stanier 337) (Ralstonia eutropha).